A 212-amino-acid polypeptide reads, in one-letter code: Large ribosomal subunit protein uL3 (212 aa).

The residue at position 153 (glutamine 153) is an N5-methylglutamine.

The protein belongs to the universal ribosomal protein uL3 family. Part of the 50S ribosomal subunit. Forms a cluster with proteins L14 and L19. Methylated by PrmB.

Its function is as follows. One of the primary rRNA binding proteins, it binds directly near the 3'-end of the 23S rRNA, where it nucleates assembly of the 50S subunit. In Dechloromonas aromatica (strain RCB), this protein is Large ribosomal subunit protein uL3.